Consider the following 154-residue polypeptide: MRCPTCKYNGTRVVDSRPADDGNSIRRRRECEKCGFRFTTFEKVEESPLIVVKKDGAREEFAREKVRRGLIRACEKRPVSAEQIEEIVNEVERELRNIGDSEIASDLIGEKVMNKLANLDEVAYVRFASVYRQFKDISVFVEELKDLMEKNKDR.

A zinc finger spans residues 3–34; that stretch reads CPTCKYNGTRVVDSRPADDGNSIRRRRECEKC. In terms of domain architecture, ATP-cone spans 49-139; it reads LIVVKKDGAR…VYRQFKDISV (91 aa).

It belongs to the NrdR family. Zn(2+) serves as cofactor.

In terms of biological role, negatively regulates transcription of bacterial ribonucleotide reductase nrd genes and operons by binding to NrdR-boxes. This is Transcriptional repressor NrdR from Listeria welshimeri serovar 6b (strain ATCC 35897 / DSM 20650 / CCUG 15529 / CIP 8149 / NCTC 11857 / SLCC 5334 / V8).